The primary structure comprises 275 residues: Tumor necrosis factor receptor superfamily member 14 (275 aa).

A signal peptide spans 1 to 38 (MEPLPGWGSAPWSQAPTDNTFRLVPCVFLLNLLQRISA). TNFR-Cys repeat units follow at residues 41–75 (SCRQEEFLVGDECCPMCNPGYHVKQVCSEHTGTVC), 77–119 (PCPP…DTVC), and 120–162 (RCIP…DTVC). 8 disulfide bridges follow: Cys42/Cys53, Cys54/Cys67, Cys57/Cys75, Cys78/Cys93, Cys96/Cys111, Cys99/Cys119, Cys121/Cys138, and Cys144/Cys162. Residues Asn184 and Asn197 are each glycosylated (N-linked (GlcNAc...) asparagine). The chain crosses the membrane as a helical span at residues 211–231 (VVSILLPLVIVGAGIAGFLIC).

The protein belongs to the tumor necrosis factor receptor superfamily. As to quaternary structure, interacts with TRAF2, TRAF3 and TRAF5. Interacts (via CRD1/TNFR-Cys 1) with CD160; this interaction is direct. Interacts (via CRD1/TNFR-Cys 1) with BTLA; this interaction is direct. Post-translationally, N-glycosylated. In terms of tissue distribution, expressed at mucosal sites including colon and pulmonary epithelial cells. Expressed in naive T cells.

It localises to the cell membrane. Receptor for four distinct ligands: The TNF superfamily members TNFSF14/LIGHT and homotrimeric LTA/lymphotoxin-alpha and the immunoglobulin superfamily members BTLA and CD160, altogether defining a complex stimulatory and inhibitory signaling network. Signals via the TRAF2-TRAF3 E3 ligase pathway to promote immune cell survival and differentiation. Participates in bidirectional cell-cell contact signaling between antigen presenting cells and lymphocytes. In response to ligation of TNFSF14/LIGHT, delivers costimulatory signals to T cells, promoting cell proliferation and effector functions. Interacts with CD160 on NK cells, enhancing IFNG production and anti-tumor immune response. In the context of bacterial infection, acts as a signaling receptor on epithelial cells for CD160 from intraepithelial lymphocytes, triggering the production of antimicrobial proteins and pro-inflammatory cytokines. Upon binding to CD160 on activated CD4+ T cells, down-regulates CD28 costimulatory signaling, restricting memory and alloantigen-specific immune response. May interact in cis (on the same cell) or in trans (on other cells) with BTLA. In cis interactions, appears to play an immune regulatory role inhibiting in trans interactions in naive T cells to maintain a resting state. In trans interactions, can predominate during adaptive immune response to provide survival signals to effector T cells. This chain is Tumor necrosis factor receptor superfamily member 14, found in Mus musculus (Mouse).